A 241-amino-acid polypeptide reads, in one-letter code: Uracil-DNA glycosylase (241 aa).

D71 functions as the Proton acceptor in the catalytic mechanism.

It belongs to the uracil-DNA glycosylase (UDG) superfamily. UNG family.

It is found in the cytoplasm. The catalysed reaction is Hydrolyzes single-stranded DNA or mismatched double-stranded DNA and polynucleotides, releasing free uracil.. Excises uracil residues from the DNA which can arise as a result of misincorporation of dUMP residues by DNA polymerase or due to deamination of cytosine. This chain is Uracil-DNA glycosylase, found in Xanthomonas axonopodis pv. citri (strain 306).